The sequence spans 218 residues: Antifreeze protein Maxi (218 aa).

Residues 1-23 (MALSLFTVGQFIFLFWTISITEA) form the signal peptide.

This sequence belongs to the type-I AFP family. Homodimer. As to expression, detected in blood serum (at protein level). Detected in liver.

Its subcellular location is the secreted. Contributes to protect fish blood from freezing at subzero sea water temperatures. Lowers the blood freezing point by about 1.1 degrees at a concentration of 0.1 mg/ml, and by about 1.5 degrees at a concentration of 0.2 mg/ml. Binds to nascent ice crystals and prevents further growth. The chain is Antifreeze protein Maxi from Pseudopleuronectes americanus (Winter flounder).